A 406-amino-acid chain; its full sequence is 2,3-bisphosphoglycerate-independent phosphoglycerate mutase (406 aa).

It belongs to the BPG-independent phosphoglycerate mutase family. A-PGAM subfamily.

It carries out the reaction (2R)-2-phosphoglycerate = (2R)-3-phosphoglycerate. The protein operates within carbohydrate degradation; glycolysis; pyruvate from D-glyceraldehyde 3-phosphate: step 3/5. Catalyzes the interconversion of 2-phosphoglycerate and 3-phosphoglycerate. In Methanococcus maripaludis (strain C6 / ATCC BAA-1332), this protein is 2,3-bisphosphoglycerate-independent phosphoglycerate mutase.